We begin with the raw amino-acid sequence, 112 residues long: Serum amyloid A protein (112 aa).

Gln-1 bears the Pyrrolidone carboxylic acid mark. Basic and acidic residues predominate over residues 75–86 (MTRDQVREDTKA). Positions 75 to 112 (MTRDQVREDTKADQFANEWGRSGKDPNHFRPPGLPDKY) are disordered.

This sequence belongs to the SAA family. Expressed by the liver; secreted in plasma.

The protein resides in the secreted. Major acute phase reactant. Apolipoprotein of the HDL complex. This is Serum amyloid A protein (SAA1) from Ovis aries (Sheep).